A 204-amino-acid polypeptide reads, in one-letter code: 3,4-dihydroxy-2-butanone 4-phosphate synthase (204 aa).

Glutamate 27 is a binding site for Mg(2+). Aspartate 31 is a binding site for D-ribulose 5-phosphate. Cysteine 56 carries the S-glutathionyl cysteine modification. D-ribulose 5-phosphate-binding positions include threonine 82 and 140–144; that span reads RDGHT. Histidine 143 provides a ligand contact to Mg(2+).

This sequence belongs to the DHBP synthase family. In terms of assembly, homodimer. Mg(2+) is required as a cofactor. Requires Mn(2+) as cofactor. In terms of processing, S-glutathionylation is reversible and dependent on a glutaredoxin.

The catalysed reaction is D-ribulose 5-phosphate = (2S)-2-hydroxy-3-oxobutyl phosphate + formate + H(+). It functions in the pathway cofactor biosynthesis; riboflavin biosynthesis; 2-hydroxy-3-oxobutyl phosphate from D-ribulose 5-phosphate: step 1/1. Its function is as follows. Catalyzes the conversion of D-ribulose 5-phosphate to formate and 3,4-dihydroxy-2-butanone 4-phosphate. This chain is 3,4-dihydroxy-2-butanone 4-phosphate synthase, found in Schizosaccharomyces pombe (strain 972 / ATCC 24843) (Fission yeast).